The sequence spans 684 residues: DNA-directed RNA polymerase subunit beta' (684 aa).

Zn(2+) contacts are provided by C69, C71, C87, and C90. Residues D489, D491, and D493 each contribute to the Mg(2+) site.

This sequence belongs to the RNA polymerase beta' chain family. RpoC1 subfamily. As to quaternary structure, in plastids the minimal PEP RNA polymerase catalytic core is composed of four subunits: alpha, beta, beta', and beta''. When a (nuclear-encoded) sigma factor is associated with the core the holoenzyme is formed, which can initiate transcription. Requires Mg(2+) as cofactor. Zn(2+) serves as cofactor.

The protein resides in the plastid. Its subcellular location is the chloroplast. The enzyme catalyses RNA(n) + a ribonucleoside 5'-triphosphate = RNA(n+1) + diphosphate. DNA-dependent RNA polymerase catalyzes the transcription of DNA into RNA using the four ribonucleoside triphosphates as substrates. The sequence is that of DNA-directed RNA polymerase subunit beta' from Morus indica (Mulberry).